A 296-amino-acid chain; its full sequence is Protoheme IX farnesyltransferase (296 aa).

Residues 1 to 9 are Cytoplasmic-facing; the sequence is MMFKQYLQV. A helical transmembrane segment spans residues 10 to 28; it reads TKPGIIFGNLISVIGGFLL. At 29–37 the chain is on the periplasmic side; the sequence is ASKGSIDYP. A helical membrane pass occupies residues 38-56; the sequence is LFIYTLVGVSLVVASGCVF. Residues 57–78 are Cytoplasmic-facing; that stretch reads NNYIDRDIDRKMERTKNRVLVK. A helical membrane pass occupies residues 79–97; that stretch reads GLISPGVSLVYATLLGIAG. Topologically, residues 98–107 are periplasmic; it reads FMLLWFGANP. The chain crosses the membrane as a helical span at residues 108 to 126; it reads LACWLGVMGFVVYVGVYSL. Residues 127-197 are Cytoplasmic-facing; that stretch reads YMKRHSVYGT…YQAANIPVLP (71 aa). Residues 198–216 form a helical membrane-spanning segment; the sequence is VVKGISVAKNHITLYIIAF. The Periplasmic portion of the chain corresponds to 217–228; sequence AVATLMLTLGGY. Residues 229–247 form a helical membrane-spanning segment; the sequence is AGYKYLVVAAAVSVWWLGM. Residues 248 to 268 are Cytoplasmic-facing; the sequence is ALRGYKVEDDKVWARKLFGFS. The chain crosses the membrane as a helical span at residues 269-287; it reads IIAITALSIMMSVDFMVPN. The Periplasmic portion of the chain corresponds to 288–296; the sequence is SQNLLTYVW.

It belongs to the UbiA prenyltransferase family. Protoheme IX farnesyltransferase subfamily.

The protein localises to the cell inner membrane. It catalyses the reaction heme b + (2E,6E)-farnesyl diphosphate + H2O = Fe(II)-heme o + diphosphate. It participates in porphyrin-containing compound metabolism; heme O biosynthesis; heme O from protoheme: step 1/1. In terms of biological role, converts heme B (protoheme IX) to heme O by substitution of the vinyl group on carbon 2 of heme B porphyrin ring with a hydroxyethyl farnesyl side group. This Salmonella typhimurium (strain LT2 / SGSC1412 / ATCC 700720) protein is Protoheme IX farnesyltransferase.